Reading from the N-terminus, the 646-residue chain is Choline transporter-like protein 1 (646 aa).

Residues 1–27 lie on the Cytoplasmic side of the membrane; it reads MGCCGCGSEEGSVRQWKPLEQRSCTDV. Residues 28–48 traverse the membrane as a helical segment; sequence LWLLIFVLFCIGMAIICGFAI. The Extracellular portion of the chain corresponds to 49 to 207; the sequence is ASGAAQRLVF…RVITGVMTSK (159 aa). Residue Asn-133 is glycosylated (N-linked (GlcNAc...) asparagine). A helical transmembrane segment spans residues 208-228; sequence EIIVGLCLMSLVLSILLMVII. The Cytoplasmic portion of the chain corresponds to 229 to 233; that stretch reads RYISK. A helical transmembrane segment spans residues 234-254; the sequence is VLVWILAILTIIGSIGGTAVL. Over 255-281 the chain is Extracellular; sequence WWLYADHKKTLKLDPSQGDVAADNVTA. A glycan (N-linked (GlcNAc...) asparagine) is linked at Asn-278. The helical transmembrane segment at 282-302 threads the bilayer; that stretch reads LLVCAIIATVITVILLLLMLI. The Cytoplasmic portion of the chain corresponds to 303-308; that stretch reads MRKRVA. Residues 309-329 traverse the membrane as a helical segment; it reads LTIALFHVAGKVFIHIPFLIF. Residues 330-331 are Extracellular-facing; sequence QS. The helical transmembrane segment at 332 to 352 threads the bilayer; sequence LWTFLALAFFWIYWIAVLLLL. At 353-373 the chain is on the cytoplasmic side; the sequence is ATAGYPQKKDQGYVEFKVSGP. The chain crosses the membrane as a helical span at residues 374 to 394; sequence LQYTWIYHLVGLIWISEFILA. Residues 395-435 lie on the Extracellular side of the membrane; the sequence is CQQMTIAGAVVTYYFTRDKHNLPATPILASMCRLIKYHLGT. Residues 436-456 traverse the membrane as a helical segment; that stretch reads VAKGSFIITLIKIPQMILVYI. At 457–530 the chain is on the cytoplasmic side; it reads HSQLKGKENA…RVAAINTVGD (74 aa). The helical transmembrane segment at 531-551 threads the bilayer; sequence FVLFLGKLLIVLVTGFVGIIL. The Extracellular portion of the chain corresponds to 552–559; that stretch reads LNYQRDYT. A helical transmembrane segment spans residues 560–580; that stretch reads VWVLPLIIICLFAFFVSHCFL. Over 581 to 646 the chain is Cytoplasmic; that stretch reads SIYEMVVDVL…KSMASGSDNA (66 aa).

This sequence belongs to the CTL (choline transporter-like) family. As to expression, present in myelinated structures from brain and spinal cord (at protein level).

The protein localises to the cell membrane. Its subcellular location is the mitochondrion outer membrane. The enzyme catalyses choline(out) + n H(+)(in) = choline(in) + n H(+)(out). The catalysed reaction is ethanolamine(out) + n H(+)(in) = ethanolamine(in) + n H(+)(out). Its function is as follows. Probable choline transporter. May be involved in membrane synthesis and myelin production. The chain is Choline transporter-like protein 1 (slc44a1) from Torpedo marmorata (Marbled electric ray).